A 910-amino-acid chain; its full sequence is Constitutive coactivator of peroxisome proliferator-activated receptor gamma (910 aa).

Disordered stretches follow at residues 333–416, 443–483, and 863–910; these read SDAE…VPMC, SEPR…ESRQ, and SHHA…WRRY. Basic and acidic residues-rich tracts occupy residues 335-351, 360-375, and 396-411; these read AESR…ESRQ and ESRR…EPRQ. The segment covering 872–890 has biased composition (polar residues); it reads QGSSYHRTGSGYSRSSQGQ. Residue Arg-885 is modified to Omega-N-methylarginine. Over residues 901–910 the composition is skewed to basic and acidic residues; the sequence is QYEHDQWRRY.

It belongs to the constitutive coactivator of PPAR-gamma family. In terms of assembly, interacts with ESR1 and RXRA. Interacts with PPARG; in a ligand-independent manner. In terms of tissue distribution, widely expressed.

It is found in the nucleus. Functions as a transactivator of PPARG and ESR1. Functions in adipogenesis through PPARG activation. The sequence is that of Constitutive coactivator of peroxisome proliferator-activated receptor gamma (FAM120B) from Homo sapiens (Human).